A 595-amino-acid chain; its full sequence is Leiomodin-1 (595 aa).

Disordered stretches follow at residues 1-322 and 467-568; these read MSKV…KVKN and DKQR…QEKN. At Ser12 the chain carries Phosphoserine. Acidic residues predominate over residues 27-40; that stretch reads EEMEELEKELDVVD. Basic and acidic residues-rich tracts occupy residues 72-105, 117-127, 134-193, 201-224, 232-251, 259-289, 467-476, and 484-493; these read CEKE…EDKG, QDSDVGKEPKK, FSRD…EKTG, SRDK…KLTA, RQED…KPEV, RDSR…REKQ, DKQRQKRLQE, and SGEKKDRLEV. At Ser85 the chain carries Phosphoserine. Position 135 is a phosphoserine (Ser135). A run of 8 repeats spans residues 165-180, 181-196, 197-212, 213-227, 228-243, 244-257, 258-273, and 274-288. Residues 165 to 288 are 8 X approximate tandem repeats; the sequence is AAVDRKEAGK…VREEGKTREK (124 aa). Composition is skewed to pro residues over residues 503-513 and 527-538; these read SPKPSPQPSPK and AAPPPPPPPLAP. The tract at residues 503–522 is 5 X 4 AA approximate tandem repeats; it reads SPKPSPQPSPKSAPKNSPKK. Ser550 carries the phosphoserine modification. The region spanning 569-588 is the WH2 domain; sequence SRDQLLAAIRSSNLKQLKKV.

Detected in smooth muscle, in stomach and uterus, blood vessel wall, and in slow fibers in extraocular muscle, urinary bladder and sternothyroid muscle (at protein level).

The protein resides in the cytoplasm. It localises to the myofibril. It is found in the sarcomere. The protein localises to the cytoskeleton. Its function is as follows. Required for proper contractility of visceral smooth muscle cells. Mediates nucleation of actin filaments. This chain is Leiomodin-1, found in Rattus norvegicus (Rat).